We begin with the raw amino-acid sequence, 370 residues long: Queuine tRNA-ribosyltransferase (370 aa).

Aspartate 89 serves as the catalytic Proton acceptor. Substrate contacts are provided by residues 89 to 93 (DSGGF), aspartate 143, glutamine 185, and glycine 212. Residues 243 to 249 (GVGKPED) are RNA binding. Residue aspartate 262 is the Nucleophile of the active site. The RNA binding; important for wobble base 34 recognition stretch occupies residues 267–271 (TRNAR). Residues cysteine 300, cysteine 302, cysteine 305, and histidine 331 each contribute to the Zn(2+) site.

It belongs to the queuine tRNA-ribosyltransferase family. Homodimer. Within each dimer, one monomer is responsible for RNA recognition and catalysis, while the other monomer binds to the replacement base PreQ1. The cofactor is Zn(2+).

The catalysed reaction is 7-aminomethyl-7-carbaguanine + guanosine(34) in tRNA = 7-aminomethyl-7-carbaguanosine(34) in tRNA + guanine. Its pathway is tRNA modification; tRNA-queuosine biosynthesis. Catalyzes the base-exchange of a guanine (G) residue with the queuine precursor 7-aminomethyl-7-deazaguanine (PreQ1) at position 34 (anticodon wobble position) in tRNAs with GU(N) anticodons (tRNA-Asp, -Asn, -His and -Tyr). Catalysis occurs through a double-displacement mechanism. The nucleophile active site attacks the C1' of nucleotide 34 to detach the guanine base from the RNA, forming a covalent enzyme-RNA intermediate. The proton acceptor active site deprotonates the incoming PreQ1, allowing a nucleophilic attack on the C1' of the ribose to form the product. After dissociation, two additional enzymatic reactions on the tRNA convert PreQ1 to queuine (Q), resulting in the hypermodified nucleoside queuosine (7-(((4,5-cis-dihydroxy-2-cyclopenten-1-yl)amino)methyl)-7-deazaguanosine). In Hydrogenovibrio crunogenus (strain DSM 25203 / XCL-2) (Thiomicrospira crunogena), this protein is Queuine tRNA-ribosyltransferase.